Here is a 363-residue protein sequence, read N- to C-terminus: Mitochondrial phosphate carrier protein 2, mitochondrial (363 aa).

The helical transmembrane segment at 65-85 (AYFAACTVAGMLSCGITHTAI) threads the bilayer. Solcar repeat units lie at residues 65-149 (AYFA…AKKY), 162-246 (YKTL…TVEL), and 263-342 (VQLG…VKVL). Topologically, residues 86–123 (TPLDVIKCNMQIDPLKYKNITSAFKTTIKEQGLKGFTR) are mitochondrial matrix. The helical transmembrane segment at 124–143 (GWSPTLLGYSAQGAFKYGLY) threads the bilayer. The Mitochondrial intermembrane segment spans residues 144–164 (EYAKKYYSDIVGPEYAAKYKT). A helical membrane pass occupies residues 165–185 (LIYLAGSASAEIVADVALCPM). At 186 to 220 (EAVKVRVQTQPGFARGLSDGLPKIIKSEGFRGLHK) the chain is on the mitochondrial matrix side. The helical transmembrane segment at 221–240 (GLVPLWGRQIPYTMMKFATF) threads the bilayer. Over 241-261 (ENTVELIYKKVMPTPKEECSK) the chain is Mitochondrial intermembrane. A helical membrane pass occupies residues 262–282 (PVQLGVSFAGGYIAGIFCAII). The Mitochondrial matrix portion of the chain corresponds to 283 to 321 (SHPADNLVSFLNNSKGATVADAVKRLGLWGMLTRGLPLR). A helical transmembrane segment spans residues 322–342 (IFMIGTLTGAQWVIYDAVKVL). Residues 343-363 (AGLPTTGGASPATALAPSVSA) lie on the Mitochondrial intermembrane side of the membrane.

It belongs to the mitochondrial carrier (TC 2.A.29) family. As to expression, expressed in leaves. Strong expression in senescent leaves.

Its subcellular location is the mitochondrion inner membrane. Transport of phosphate groups from the cytosol to the mitochondrial matrix. Mediates salt stress tolerance through an ATP-dependent pathway and via modulation of the gibberellin metabolism. This Arabidopsis thaliana (Mouse-ear cress) protein is Mitochondrial phosphate carrier protein 2, mitochondrial (MPT2).